Reading from the N-terminus, the 208-residue chain is Protein-L-isoaspartate O-methyltransferase (208 aa).

The active site involves Ser-59.

The protein belongs to the methyltransferase superfamily. L-isoaspartyl/D-aspartyl protein methyltransferase family.

Its subcellular location is the cytoplasm. It catalyses the reaction [protein]-L-isoaspartate + S-adenosyl-L-methionine = [protein]-L-isoaspartate alpha-methyl ester + S-adenosyl-L-homocysteine. Catalyzes the methyl esterification of L-isoaspartyl residues in peptides and proteins that result from spontaneous decomposition of normal L-aspartyl and L-asparaginyl residues. It plays a role in the repair and/or degradation of damaged proteins. The chain is Protein-L-isoaspartate O-methyltransferase from Serratia proteamaculans (strain 568).